The chain runs to 102 residues: UPF0328 protein ECU10_1820 (102 aa).

The protein belongs to the UPF0328 family.

The protein is UPF0328 protein ECU10_1820 of Encephalitozoon cuniculi (strain GB-M1) (Microsporidian parasite).